We begin with the raw amino-acid sequence, 89 residues long: Elongation factor 1-beta (89 aa).

Belongs to the EF-1-beta/EF-1-delta family.

Its function is as follows. Promotes the exchange of GDP for GTP in EF-1-alpha/GDP, thus allowing the regeneration of EF-1-alpha/GTP that could then be used to form the ternary complex EF-1-alpha/GTP/AAtRNA. The protein is Elongation factor 1-beta of Methanosarcina barkeri (strain Fusaro / DSM 804).